The following is a 463-amino-acid chain: Asparagine--tRNA ligase (463 aa).

Belongs to the class-II aminoacyl-tRNA synthetase family. In terms of assembly, homodimer.

It localises to the cytoplasm. It catalyses the reaction tRNA(Asn) + L-asparagine + ATP = L-asparaginyl-tRNA(Asn) + AMP + diphosphate + H(+). In Clostridium kluyveri (strain ATCC 8527 / DSM 555 / NBRC 12016 / NCIMB 10680 / K1), this protein is Asparagine--tRNA ligase.